Consider the following 727-residue polypeptide: DNA topoisomerase 3 (727 aa).

One can recognise a Toprim domain in the interval 3-136 (KTVVLAEKPS…IKRLWISSVT (134 aa)). Mg(2+) is bound by residues Glu9 and Asp105. The Topo IA-type catalytic domain maps to 153–593 (YENLYHSAVA…DMKAYAHQTV (441 aa)). Positions 187–192 (SCGRVQ) are interaction with DNA. Residue Tyr310 is the O-(5'-phospho-DNA)-tyrosine intermediate of the active site. Residues 685 to 699 (KRKNKDKARATKRDV) are compositionally biased toward basic and acidic residues. The tract at residues 685 to 714 (KRKNKDKARATKRDVSSYMKKQNKDEPINN) is disordered.

It belongs to the type IA topoisomerase family. Mg(2+) is required as a cofactor.

It carries out the reaction ATP-independent breakage of single-stranded DNA, followed by passage and rejoining.. Its function is as follows. Releases the supercoiling and torsional tension of DNA, which is introduced during the DNA replication and transcription, by transiently cleaving and rejoining one strand of the DNA duplex. Introduces a single-strand break via transesterification at a target site in duplex DNA. The scissile phosphodiester is attacked by the catalytic tyrosine of the enzyme, resulting in the formation of a DNA-(5'-phosphotyrosyl)-enzyme intermediate and the expulsion of a 3'-OH DNA strand. The free DNA strand then undergoes passage around the unbroken strand, thus removing DNA supercoils. Finally, in the religation step, the DNA 3'-OH attacks the covalent intermediate to expel the active-site tyrosine and restore the DNA phosphodiester backbone. The sequence is that of DNA topoisomerase 3 from Bacillus subtilis (strain 168).